We begin with the raw amino-acid sequence, 72 residues long: Alpha-elapitoxin-Ast2b (72 aa).

5 disulfides stabilise this stretch: Cys3-Cys20, Cys13-Cys41, Cys26-Cys30, Cys45-Cys56, and Cys57-Cys62. Arg72 carries the arginine amide modification.

The protein belongs to the three-finger toxin family. Long-chain subfamily. Type II alpha-neurotoxin sub-subfamily. In terms of tissue distribution, expressed by the venom gland.

Its subcellular location is the secreted. Functionally, binds with high affinity to muscular (alpha-1/CHRNA1) and neuronal (alpha-7/CHRNA7) nicotinic acetylcholine receptor (nAChR) and inhibits acetylcholine from binding to the receptor, thereby impairing neuromuscular and neuronal transmission. The polypeptide is Alpha-elapitoxin-Ast2b (Hydrophis stokesii (Stokes's sea snake)).